Here is an 86-residue protein sequence, read N- to C-terminus: MAKKSPENASPVAQFEQSLESLEQLVEQMETGELSLEASLSAYERGVGLYRQCQQALEQAELRVRLLSDPAQPEASEPFDPPSHDG.

Residues 67–86 are disordered; it reads LSDPAQPEASEPFDPPSHDG.

The protein belongs to the XseB family. Heterooligomer composed of large and small subunits.

It is found in the cytoplasm. The enzyme catalyses Exonucleolytic cleavage in either 5'- to 3'- or 3'- to 5'-direction to yield nucleoside 5'-phosphates.. In terms of biological role, bidirectionally degrades single-stranded DNA into large acid-insoluble oligonucleotides, which are then degraded further into small acid-soluble oligonucleotides. This chain is Exodeoxyribonuclease 7 small subunit, found in Stenotrophomonas maltophilia (strain K279a).